A 291-amino-acid polypeptide reads, in one-letter code: Protein/nucleic acid deglycase HchA (291 aa).

Basic and acidic residues predominate over residues 1–18 (MSNERDTSRTPTPDHAEH). Positions 1–24 (MSNERDTSRTPTPDHAEHNAFFPS) are disordered. Residue C188 is the Nucleophile of the active site.

It belongs to the peptidase C56 family. HchA subfamily.

It is found in the cytoplasm. It catalyses the reaction N(omega)-(1-hydroxy-2-oxopropyl)-L-arginyl-[protein] + H2O = lactate + L-arginyl-[protein] + H(+). It carries out the reaction N(6)-(1-hydroxy-2-oxopropyl)-L-lysyl-[protein] + H2O = lactate + L-lysyl-[protein] + H(+). The enzyme catalyses S-(1-hydroxy-2-oxopropyl)-L-cysteinyl-[protein] + H2O = lactate + L-cysteinyl-[protein] + H(+). The catalysed reaction is N(omega)-(1-hydroxy-2-oxoethyl)-L-arginyl-[protein] + H2O = L-arginyl-[protein] + glycolate + H(+). It catalyses the reaction N(6)-(1-hydroxy-2-oxoethyl)-L-lysyl-[protein] + H2O = glycolate + L-lysyl-[protein] + H(+). It carries out the reaction S-(1-hydroxy-2-oxoethyl)-L-cysteinyl-[protein] + H2O = glycolate + L-cysteinyl-[protein] + H(+). The enzyme catalyses N(2)-(1-hydroxy-2-oxopropyl)-dGTP + H2O = lactate + dGTP + H(+). The catalysed reaction is N(2)-(1-hydroxy-2-oxopropyl)-GTP + H2O = lactate + GTP + H(+). It catalyses the reaction N(2)-(1-hydroxy-2-oxopropyl)-GDP + H2O = lactate + GDP + H(+). It carries out the reaction N(2)-(1-hydroxy-2-oxopropyl)-GMP + H2O = lactate + GMP + H(+). The enzyme catalyses N(2)-(1-hydroxy-2-oxoethyl)-dGTP + H2O = dGTP + glycolate + H(+). The catalysed reaction is N(2)-(1-hydroxy-2-oxoethyl)-GTP + H2O = glycolate + GTP + H(+). It catalyses the reaction N(2)-(1-hydroxy-2-oxoethyl)-GDP + H2O = glycolate + GDP + H(+). It carries out the reaction N(2)-(1-hydroxy-2-oxoethyl)-GMP + H2O = glycolate + GMP + H(+). The enzyme catalyses an N(2)-(1-hydroxy-2-oxopropyl)-guanosine in RNA + H2O = a guanosine in RNA + lactate + H(+). The catalysed reaction is an N(2)-(1-hydroxy-2-oxopropyl)-2'-deoxyguanosine in DNA + H2O = a 2'-deoxyguanosine in DNA + lactate + H(+). It catalyses the reaction an N(2)-(1-hydroxy-2-oxoethyl)-guanosine in RNA + H2O = a guanosine in RNA + glycolate + H(+). It carries out the reaction an N(2)-(1-hydroxy-2-oxoethyl)-2'-deoxyguanosine in DNA + H2O = a 2'-deoxyguanosine in DNA + glycolate + H(+). Its function is as follows. Protein and nucleotide deglycase that catalyzes the deglycation of the Maillard adducts formed between amino groups of proteins or nucleotides and reactive carbonyl groups of glyoxals. Thus, functions as a protein deglycase that repairs methylglyoxal- and glyoxal-glycated proteins, and releases repaired proteins and lactate or glycolate, respectively. Deglycates cysteine, arginine and lysine residues in proteins, and thus reactivates these proteins by reversing glycation by glyoxals. Acts on early glycation intermediates (hemithioacetals and aminocarbinols), preventing the formation of Schiff bases and advanced glycation endproducts (AGE). Also functions as a nucleotide deglycase able to repair glycated guanine in the free nucleotide pool (GTP, GDP, GMP, dGTP) and in DNA and RNA. Is thus involved in a major nucleotide repair system named guanine glycation repair (GG repair), dedicated to reversing methylglyoxal and glyoxal damage via nucleotide sanitization and direct nucleic acid repair. Plays an important role in protecting cells from carbonyl stress. This chain is Protein/nucleic acid deglycase HchA, found in Pseudomonas aeruginosa (strain UCBPP-PA14).